The chain runs to 267 residues: 3-methyl-2-oxobutanoate hydroxymethyltransferase (267 aa).

Mg(2+) is bound by residues Asp-45 and Asp-84. Residues 45–46 (DS), Asp-84, and Lys-113 contribute to the 3-methyl-2-oxobutanoate site. Glu-115 contributes to the Mg(2+) binding site. The Proton acceptor role is filled by Glu-182.

The protein belongs to the PanB family. As to quaternary structure, homodecamer; pentamer of dimers. Requires Mg(2+) as cofactor.

The protein resides in the cytoplasm. It carries out the reaction 3-methyl-2-oxobutanoate + (6R)-5,10-methylene-5,6,7,8-tetrahydrofolate + H2O = 2-dehydropantoate + (6S)-5,6,7,8-tetrahydrofolate. It participates in cofactor biosynthesis; coenzyme A biosynthesis. Its function is as follows. Catalyzes the reversible reaction in which hydroxymethyl group from 5,10-methylenetetrahydrofolate is transferred onto alpha-ketoisovalerate to form ketopantoate. The protein is 3-methyl-2-oxobutanoate hydroxymethyltransferase of Saccharolobus islandicus (strain Y.G.57.14 / Yellowstone #1) (Sulfolobus islandicus).